The primary structure comprises 619 residues: BUD13 homolog (619 aa).

The disordered stretch occupies residues 20–56 (ADAGVDRGSESGRKRRKKRPKPGGAGGKGMRIVDDDV). Ser28 carries the phosphoserine modification. Lys65 participates in a covalent cross-link: Glycyl lysine isopeptide (Lys-Gly) (interchain with G-Cter in SUMO2). The segment at 106–429 (LGGHNEDLPS…AHMYSGAKTG (324 aa)) is disordered. A compositionally biased stretch (basic and acidic residues) spans 109 to 128 (HNEDLPSNRHFRHDTPDSSP). Thr123 carries the post-translational modification Phosphothreonine. Position 127 is a phosphoserine (Ser127). Thr135 carries the phosphothreonine modification. Phosphoserine is present on Ser139. A compositionally biased stretch (basic and acidic residues) spans 139–160 (SPRKDRHDTPDPSPRRARHDTP). A Phosphothreonine modification is found at Thr147. Ser151 bears the Phosphoserine mark. Phosphothreonine is present on Thr159. Residues Ser163, Ser172, Ser175, Ser197, Ser201, Ser214, Ser222, Ser226, Ser235, Ser236, Ser240, Ser248, Ser258, Ser259, Ser271, and Ser281 each carry the phosphoserine modification. The segment covering 246-264 (NNSPDTSRRTLGSSDTQQL) has biased composition (polar residues). The segment covering 289–306 (KAPERASSKTSPHWKESG) has biased composition (basic and acidic residues). Residue Ser325 is modified to Phosphoserine. The segment covering 335–353 (HFGDKKQLDSKGDCQKATD) has biased composition (basic and acidic residues). Phosphoserine is present on residues Ser354, Ser357, Ser358, Ser391, and Ser407. A compositionally biased stretch (low complexity) spans 404–415 (SDLSPPRRSQPP). A coiled-coil region spans residues 433–520 (TDIQREQQEL…VEDAMKEMQK (88 aa)). Tyr494 carries the phosphotyrosine modification. The segment at 538-578 (QEREGDPMANFIKKNKAKENKNKKVRPRYSGPAPPPNRFNI) is disordered. Position 567 is a phosphoserine (Ser567).

The protein belongs to the CWC26 family. Part of the activated spliceosome B/catalytic step 1 spliceosome, one of the forms of the spliceosome which has a well-formed active site but still cannot catalyze the branching reaction and is composed of at least 52 proteins, the U2, U5 and U6 snRNAs and the pre-mRNA. Component of the minor spliceosome, which splices U12-type introns.

The protein resides in the nucleus. Its function is as follows. Involved in pre-mRNA splicing as component of the activated spliceosome. As a component of the minor spliceosome, involved in the splicing of U12-type introns in pre-mRNAs. The protein is BUD13 homolog (BUD13) of Homo sapiens (Human).